A 384-amino-acid chain; its full sequence is 4-hydroxy-3-methylbut-2-en-1-yl diphosphate synthase (flavodoxin) (384 aa).

[4Fe-4S] cluster is bound by residues cysteine 272, cysteine 275, cysteine 307, and glutamate 314.

Belongs to the IspG family. It depends on [4Fe-4S] cluster as a cofactor.

The catalysed reaction is (2E)-4-hydroxy-3-methylbut-2-enyl diphosphate + oxidized [flavodoxin] + H2O + 2 H(+) = 2-C-methyl-D-erythritol 2,4-cyclic diphosphate + reduced [flavodoxin]. The protein operates within isoprenoid biosynthesis; isopentenyl diphosphate biosynthesis via DXP pathway; isopentenyl diphosphate from 1-deoxy-D-xylulose 5-phosphate: step 5/6. In terms of biological role, converts 2C-methyl-D-erythritol 2,4-cyclodiphosphate (ME-2,4cPP) into 1-hydroxy-2-methyl-2-(E)-butenyl 4-diphosphate. This Rhodospirillum rubrum (strain ATCC 11170 / ATH 1.1.1 / DSM 467 / LMG 4362 / NCIMB 8255 / S1) protein is 4-hydroxy-3-methylbut-2-en-1-yl diphosphate synthase (flavodoxin).